Consider the following 295-residue polypeptide: Nucleotide-binding protein CMS1991 (295 aa).

Residue 19 to 26 (GMSGAGRS) coordinates ATP. 70 to 73 (DVRG) serves as a coordination point for GTP.

The protein belongs to the RapZ-like family.

Its function is as follows. Displays ATPase and GTPase activities. This is Nucleotide-binding protein CMS1991 from Clavibacter sepedonicus (Clavibacter michiganensis subsp. sepedonicus).